We begin with the raw amino-acid sequence, 379 residues long: Structure-specific endonuclease subunit EME2 (379 aa).

A disordered region spans residues 1-55; that stretch reads MARVGPGRAGVSCQGRGRGRGGSGQRRPPTWEISDSDAEDSAGSEAAARARDPAG. The segment at 50-266 is nuclease-like domain; forms the post-nick DNA binding interface and is involved in DNA recognition and bending; the sequence is ARDPAGERRA…YPLKQYRESQ (217 aa). Residues 288-379 are helix-hairpin-helix (2HhH); forms the pre-nick DNA binding interface and is involved in DNA recognition and bending; that stretch reads GLQAAWRRQI…NPDLLLDLGS (92 aa).

The protein belongs to the EME1/MMS4 family. In terms of assembly, part of the heterodimeric MUS81-EME2 complex; the complex forms specifically during the DNA replication phase of the cell cycle.

It is found in the nucleus. Its function is as follows. Non-catalytic subunit of the structure-specific, heterodimeric DNA endonuclease MUS81-EME2 which is involved in the maintenance of genome stability. In the complex, EME2 is required for DNA cleavage, participating in DNA recognition and bending. MUS81-EME2 cleaves 3'-flaps and nicked Holliday junctions, and exhibit limited endonuclease activity with 5' flaps and nicked double-stranded DNAs. MUS81-EME2 which is active during the replication of DNA is more specifically involved in replication fork processing. Replication forks frequently encounter obstacles to their passage, including DNA base lesions, DNA interstrand cross-links, difficult-to-replicate sequences, transcription bubbles, or tightly bound proteins. One mechanism for the restart of a stalled replication fork involves nucleolytic cleavage mediated by the MUS81-EME2 endonuclease. By acting upon the stalled fork, MUS81-EME2 generates a DNA double-strand break (DSB) that can be repaired by homologous recombination, leading to the restoration of an active fork. MUS81-EME2 could also function in telomere maintenance. This chain is Structure-specific endonuclease subunit EME2, found in Homo sapiens (Human).